The following is a 232-amino-acid chain: 2,3,4,5-tetrahydropyridine-2,6-dicarboxylate N-acetyltransferase (232 aa).

The protein belongs to the transferase hexapeptide repeat family. DapH subfamily.

It catalyses the reaction (S)-2,3,4,5-tetrahydrodipicolinate + acetyl-CoA + H2O = L-2-acetamido-6-oxoheptanedioate + CoA. It functions in the pathway amino-acid biosynthesis; L-lysine biosynthesis via DAP pathway; LL-2,6-diaminopimelate from (S)-tetrahydrodipicolinate (acetylase route): step 1/3. Its function is as follows. Catalyzes the transfer of an acetyl group from acetyl-CoA to tetrahydrodipicolinate. In Kosmotoga olearia (strain ATCC BAA-1733 / DSM 21960 / TBF 19.5.1), this protein is 2,3,4,5-tetrahydropyridine-2,6-dicarboxylate N-acetyltransferase.